Consider the following 90-residue polypeptide: Small ribosomal subunit protein uS15 (90 aa).

The protein belongs to the universal ribosomal protein uS15 family. In terms of assembly, part of the 30S ribosomal subunit. Forms a bridge to the 50S subunit in the 70S ribosome, contacting the 23S rRNA.

One of the primary rRNA binding proteins, it binds directly to 16S rRNA where it helps nucleate assembly of the platform of the 30S subunit by binding and bridging several RNA helices of the 16S rRNA. In terms of biological role, forms an intersubunit bridge (bridge B4) with the 23S rRNA of the 50S subunit in the ribosome. The sequence is that of Small ribosomal subunit protein uS15 from Aliarcobacter butzleri (strain RM4018) (Arcobacter butzleri).